Here is a 168-residue protein sequence, read N- to C-terminus: G/U mismatch-specific DNA glycosylase (168 aa).

It belongs to the uracil-DNA glycosylase (UDG) superfamily. TDG/mug family. As to quaternary structure, binds DNA as a monomer.

The protein resides in the cytoplasm. The enzyme catalyses Specifically hydrolyzes mismatched double-stranded DNA and polynucleotides, releasing free uracil.. Its function is as follows. Excises ethenocytosine and uracil, which can arise by alkylation or deamination of cytosine, respectively, from the corresponding mispairs with guanine in ds-DNA. It is capable of hydrolyzing the carbon-nitrogen bond between the sugar-phosphate backbone of the DNA and the mispaired base. The complementary strand guanine functions in substrate recognition. Required for DNA damage lesion repair in stationary-phase cells. The protein is G/U mismatch-specific DNA glycosylase of Escherichia coli (strain SMS-3-5 / SECEC).